Consider the following 465-residue polypeptide: Cysteine--tRNA ligase (465 aa).

Residue Cys-29 participates in Zn(2+) binding. The short motif at 31 to 41 is the 'HIGH' region element; the sequence is PTVYNYIHIGN. Zn(2+) is bound by residues Cys-209, His-234, and Glu-238. A 'KMSKS' region motif is present at residues 266–270; it reads KMSKS. Lys-269 provides a ligand contact to ATP. At Ser-270 the chain carries Phosphoserine.

This sequence belongs to the class-I aminoacyl-tRNA synthetase family. As to quaternary structure, monomer. Requires Zn(2+) as cofactor.

It is found in the cytoplasm. It carries out the reaction tRNA(Cys) + L-cysteine + ATP = L-cysteinyl-tRNA(Cys) + AMP + diphosphate. This is Cysteine--tRNA ligase from Bacillus anthracis (strain A0248).